The chain runs to 264 residues: Thiazole synthase (264 aa).

K106 functions as the Schiff-base intermediate with DXP in the catalytic mechanism. Residues G167, A193–G194, and N215–T216 each bind 1-deoxy-D-xylulose 5-phosphate.

This sequence belongs to the ThiG family. In terms of assembly, homotetramer. Forms heterodimers with either ThiH or ThiS.

The protein resides in the cytoplasm. The catalysed reaction is [ThiS sulfur-carrier protein]-C-terminal-Gly-aminoethanethioate + 2-iminoacetate + 1-deoxy-D-xylulose 5-phosphate = [ThiS sulfur-carrier protein]-C-terminal Gly-Gly + 2-[(2R,5Z)-2-carboxy-4-methylthiazol-5(2H)-ylidene]ethyl phosphate + 2 H2O + H(+). It functions in the pathway cofactor biosynthesis; thiamine diphosphate biosynthesis. Functionally, catalyzes the rearrangement of 1-deoxy-D-xylulose 5-phosphate (DXP) to produce the thiazole phosphate moiety of thiamine. Sulfur is provided by the thiocarboxylate moiety of the carrier protein ThiS. In vitro, sulfur can be provided by H(2)S. In Xanthomonas oryzae pv. oryzae (strain MAFF 311018), this protein is Thiazole synthase.